Reading from the N-terminus, the 426-residue chain is Mediator of RNA polymerase II transcription subunit 4 (426 aa).

The tract at residues 1-56 is disordered; sequence MLQHQIVQSPARLGLTGPGSPSVQNPTPTRHGHPTSSSSSQSQHQQIQQQPNLLPS. Over residues 19–28 the composition is skewed to polar residues; it reads GSPSVQNPTP. A compositionally biased stretch (low complexity) spans 36–56; the sequence is SSSSSQSQHQQIQQQPNLLPS. Residues 160 to 212 are a coiled coil; the sequence is TELQEILDLQDAKQKVAREIKSKDSSLLAFANKLKDAERVLDMLVDDYSDYRK. Disordered regions lie at residues 214-236 and 373-426; these read KRSK…STTV and IAAP…DDED. Residues 406–426 show a composition bias toward acidic residues; sequence ILEDDDSSDYSSDDASSDDED.

Belongs to the Mediator complex subunit 4 family. Component of the Mediator complex.

It localises to the nucleus. In terms of biological role, component of the Mediator complex, a coactivator involved in the regulated transcription of nearly all RNA polymerase II-dependent genes. Mediator functions as a bridge to convey information from gene-specific regulatory proteins to the basal RNA polymerase II transcription machinery. The Mediator complex, having a compact conformation in its free form, is recruited to promoters by direct interactions with regulatory proteins and serves for the assembly of a functional preinitiation complex with RNA polymerase II and the general transcription factors. The sequence is that of Mediator of RNA polymerase II transcription subunit 4 (MED4) from Arabidopsis thaliana (Mouse-ear cress).